Consider the following 144-residue polypeptide: 3-hydroxyacyl-[acyl-carrier-protein] dehydratase FabZ (144 aa).

The active site involves His51.

This sequence belongs to the thioester dehydratase family. FabZ subfamily.

The protein resides in the cytoplasm. It catalyses the reaction a (3R)-hydroxyacyl-[ACP] = a (2E)-enoyl-[ACP] + H2O. Functionally, involved in unsaturated fatty acids biosynthesis. Catalyzes the dehydration of short chain beta-hydroxyacyl-ACPs and long chain saturated and unsaturated beta-hydroxyacyl-ACPs. The chain is 3-hydroxyacyl-[acyl-carrier-protein] dehydratase FabZ from Lactococcus lactis subsp. cremoris (strain MG1363).